Reading from the N-terminus, the 268-residue chain is Tryptophan synthase alpha chain (268 aa).

Catalysis depends on proton acceptor residues Glu49 and Asp60.

The protein belongs to the TrpA family. Tetramer of two alpha and two beta chains.

It catalyses the reaction (1S,2R)-1-C-(indol-3-yl)glycerol 3-phosphate + L-serine = D-glyceraldehyde 3-phosphate + L-tryptophan + H2O. It functions in the pathway amino-acid biosynthesis; L-tryptophan biosynthesis; L-tryptophan from chorismate: step 5/5. Functionally, the alpha subunit is responsible for the aldol cleavage of indoleglycerol phosphate to indole and glyceraldehyde 3-phosphate. This chain is Tryptophan synthase alpha chain, found in Salmonella paratyphi A (strain ATCC 9150 / SARB42).